We begin with the raw amino-acid sequence, 420 residues long: Cytochrome c biogenesis protein Ccs1 (420 aa).

Transmembrane regions (helical) follow at residues 12–32, 71–91, and 157–177; these read LRFS…GTVI, TWWF…CTFL, and IAPI…IVGS.

It belongs to the Ccs1/CcsB family. As to quaternary structure, may interact with CcsA.

The protein localises to the plastid. It localises to the chloroplast thylakoid membrane. Required during biogenesis of c-type cytochromes (cytochrome c6 and cytochrome f) at the step of heme attachment. In Phaeodactylum tricornutum (strain CCAP 1055/1), this protein is Cytochrome c biogenesis protein Ccs1.